The primary structure comprises 343 residues: Anthranilate phosphoribosyltransferase (343 aa).

Residues G84, 87–88 (GD), T92, 94–97 (NIST), 112–120 (KHGNRGVSS), and S124 contribute to the 5-phospho-alpha-D-ribose 1-diphosphate site. G84 provides a ligand contact to anthranilate. Position 96 (S96) interacts with Mg(2+). N115 is an anthranilate binding site. R170 serves as a coordination point for anthranilate. 2 residues coordinate Mg(2+): D229 and E230.

This sequence belongs to the anthranilate phosphoribosyltransferase family. As to quaternary structure, homodimer. The cofactor is Mg(2+).

The catalysed reaction is N-(5-phospho-beta-D-ribosyl)anthranilate + diphosphate = 5-phospho-alpha-D-ribose 1-diphosphate + anthranilate. It functions in the pathway amino-acid biosynthesis; L-tryptophan biosynthesis; L-tryptophan from chorismate: step 2/5. Catalyzes the transfer of the phosphoribosyl group of 5-phosphorylribose-1-pyrophosphate (PRPP) to anthranilate to yield N-(5'-phosphoribosyl)-anthranilate (PRA). The polypeptide is Anthranilate phosphoribosyltransferase (Burkholderia orbicola (strain MC0-3)).